The chain runs to 215 residues: Casparian strip membrane protein 3 (215 aa).

A disordered region spans residues 1-26; it reads MDSEKTGEAKITIQEPKAADPKGKGI. Residues 1 to 55 lie on the Cytoplasmic side of the membrane; it reads MDSEKTGEAKITIQEPKAADPKGKGIADAPPPPVVVTTAKAIQKLPRGGWKKGVA. A helical transmembrane segment spans residues 56 to 76; the sequence is IFDFVVRLCAIATGLAATGIM. The Extracellular segment spans residues 77 to 101; sequence GTTEQTLPFFTQFFQFHAEYNDLPT. The chain crosses the membrane as a helical span at residues 102-122; it reads FMFFVFANGIASGYLILSLPF. Residues 123 to 136 are Cytoplasmic-facing; sequence SIVCIVRPLAIVPR. The helical transmembrane segment at 137-157 threads the bilayer; sequence LLLIIFDTVVMALTIAAASAA. The Extracellular segment spans residues 158–189; the sequence is AAIVYLAHNGNSNANWNAICQQFNDFCQQTST. A helical membrane pass occupies residues 190 to 210; sequence AVVASFITAAMLTFLIVLSAF. The Cytoplasmic segment spans residues 211–215; it reads ALKRN.

The protein belongs to the Casparian strip membrane proteins (CASP) family. Homodimer and heterodimers.

Its subcellular location is the cell membrane. In terms of biological role, regulates membrane-cell wall junctions and localized cell wall deposition. Required for establishment of the Casparian strip membrane domain (CSD) and the subsequent formation of Casparian strips, a cell wall modification of the root endodermis that determines an apoplastic barrier between the intraorganismal apoplasm and the extraorganismal apoplasm and prevents lateral diffusion. The chain is Casparian strip membrane protein 3 from Ricinus communis (Castor bean).